Consider the following 145-residue polypeptide: Protein BUD31 homolog 2 (145 aa).

Belongs to the BUD31 (G10) family.

Its subcellular location is the nucleus. The sequence is that of Protein BUD31 homolog 2 from Oryza sativa subsp. japonica (Rice).